The sequence spans 63 residues: Large ribosomal subunit protein uL29 (63 aa).

The protein belongs to the universal ribosomal protein uL29 family.

The chain is Large ribosomal subunit protein uL29 from Aliivibrio fischeri (strain ATCC 700601 / ES114) (Vibrio fischeri).